The primary structure comprises 555 residues: CTP synthase (555 aa).

The tract at residues 1–267 (MAKYIFVTGG…GNYLTLRLGL (267 aa)) is amidoligase domain. Residue S13 participates in CTP binding. Position 13 (S13) interacts with UTP. 14–19 (SVGKGI) contacts ATP. Y54 provides a ligand contact to L-glutamine. Residue D71 participates in ATP binding. Mg(2+) is bound by residues D71 and E141. Residues 148 to 150 (DIE), 188 to 193 (KTKPTQ), and K224 contribute to the CTP site. UTP contacts are provided by residues 188-193 (KTKPTQ) and K224. The region spanning 292 to 535 (AIALVGKYVE…IAAAAQTFRE (244 aa)) is the Glutamine amidotransferase type-1 domain. G354 is an L-glutamine binding site. C381 acts as the Nucleophile; for glutamine hydrolysis in catalysis. Residues 382 to 385 (LGMQ), E406, and R463 contribute to the L-glutamine site. Active-site residues include H508 and E510.

Belongs to the CTP synthase family. As to quaternary structure, homotetramer.

The catalysed reaction is UTP + L-glutamine + ATP + H2O = CTP + L-glutamate + ADP + phosphate + 2 H(+). It catalyses the reaction L-glutamine + H2O = L-glutamate + NH4(+). The enzyme catalyses UTP + NH4(+) + ATP = CTP + ADP + phosphate + 2 H(+). Its pathway is pyrimidine metabolism; CTP biosynthesis via de novo pathway; CTP from UDP: step 2/2. Allosterically activated by GTP, when glutamine is the substrate; GTP has no effect on the reaction when ammonia is the substrate. The allosteric effector GTP functions by stabilizing the protein conformation that binds the tetrahedral intermediate(s) formed during glutamine hydrolysis. Inhibited by the product CTP, via allosteric rather than competitive inhibition. In terms of biological role, catalyzes the ATP-dependent amination of UTP to CTP with either L-glutamine or ammonia as the source of nitrogen. Regulates intracellular CTP levels through interactions with the four ribonucleotide triphosphates. In Roseiflexus castenholzii (strain DSM 13941 / HLO8), this protein is CTP synthase.